A 142-amino-acid chain; its full sequence is Universal stress protein G (142 aa).

It belongs to the universal stress protein A family.

The protein is Universal stress protein G (uspG) of Escherichia coli O157:H7.